The primary structure comprises 307 residues: Olfactory receptor 5M3 (307 aa).

At 1–23 (MLNFTDVTEFILLGLTSRREWQV) the chain is on the extracellular side. Asparagine 3 is a glycosylation site (N-linked (GlcNAc...) asparagine). A helical transmembrane segment spans residues 24–44 (LFFIIFLVVYIITMVGNIGMM). At 45 to 52 (VLIKVSPQ) the chain is on the cytoplasmic side. Residues 53-73 (LNNPMYFFLSHLSFVDVWFSS) traverse the membrane as a helical segment. Over 74-97 (NVTPKMLENLLSDKKTITYAGCLV) the chain is Extracellular. A disulfide bridge connects residues cysteine 95 and cysteine 187. Residues 98 to 118 (QCFFFIALVHVEIFILAAMAF) form a helical membrane-spanning segment. Residues 119–137 (DRYMAIGNPLLYGSKMSRV) lie on the Cytoplasmic side of the membrane. The chain crosses the membrane as a helical span at residues 138–158 (VCIRLITFPYIYGFLTSLAAT). Residues 159-194 (LWTYGLYFCGKIEINHFYCADPPLIKMACAGTFVKE) lie on the Extracellular side of the membrane. A helical membrane pass occupies residues 195–215 (YTMIILAGINFTYSLTVIIIS). At 216 to 235 (YLFILIAILRMRSAEGRQKA) the chain is on the cytoplasmic side. Residues 236 to 256 (FSTCGSHLTAVIIFYGTLIFM) traverse the membrane as a helical segment. Topologically, residues 257–269 (YLRRPTEESVEQG) are extracellular. The helical transmembrane segment at 270–290 (KMVAVFYTTVIPMLNPMIYSL) threads the bilayer. Residues 291 to 307 (RNKDVKKAMMKVISRSC) lie on the Cytoplasmic side of the membrane.

This sequence belongs to the G-protein coupled receptor 1 family.

It localises to the cell membrane. In terms of biological role, odorant receptor. In Homo sapiens (Human), this protein is Olfactory receptor 5M3 (OR5M3).